Consider the following 285-residue polypeptide: Meiotically up-regulated gene 125 protein (285 aa).

It is found in the cytoplasm. The protein resides in the nucleus. Has a role in meiosis. The protein is Meiotically up-regulated gene 125 protein (mug125) of Schizosaccharomyces pombe (strain 972 / ATCC 24843) (Fission yeast).